A 383-amino-acid polypeptide reads, in one-letter code: Aliphatic nitrilase (383 aa).

The CN hydrolase domain occupies 13–288 (VKVATVQAEP…EGLLYAELDL (276 aa)). Glu53 (proton acceptor) is an active-site residue. The Proton donor role is filled by Lys136. Catalysis depends on Cys170, which acts as the Nucleophile. Positions 359–383 (ATLPLDAPAPAPAPEQKSGRAKAEA) are disordered.

Belongs to the carbon-nitrogen hydrolase superfamily. Nitrilase family.

It catalyses the reaction an aliphatic nitrile + 2 H2O = a carboxylate + NH4(+). Functionally, acts on aliphatic nitriles such as acrylonitrile, crotononitrile and glutaronitrile. The protein is Aliphatic nitrilase of Rhodococcus rhodochrous.